The following is a 379-amino-acid chain: Tetraacyldisaccharide 4'-kinase (379 aa).

Residue 63–70 (AVGGAGKT) coordinates ATP.

This sequence belongs to the LpxK family.

It carries out the reaction a lipid A disaccharide + ATP = a lipid IVA + ADP + H(+). It participates in glycolipid biosynthesis; lipid IV(A) biosynthesis; lipid IV(A) from (3R)-3-hydroxytetradecanoyl-[acyl-carrier-protein] and UDP-N-acetyl-alpha-D-glucosamine: step 6/6. In terms of biological role, transfers the gamma-phosphate of ATP to the 4'-position of a tetraacyldisaccharide 1-phosphate intermediate (termed DS-1-P) to form tetraacyldisaccharide 1,4'-bis-phosphate (lipid IVA). In Anaeromyxobacter dehalogenans (strain 2CP-1 / ATCC BAA-258), this protein is Tetraacyldisaccharide 4'-kinase.